Reading from the N-terminus, the 122-residue chain is Large ribosomal subunit protein uL14 (122 aa).

The protein belongs to the universal ribosomal protein uL14 family. Part of the 50S ribosomal subunit. Forms a cluster with proteins L3 and L19. In the 70S ribosome, L14 and L19 interact and together make contacts with the 16S rRNA in bridges B5 and B8.

Binds to 23S rRNA. Forms part of two intersubunit bridges in the 70S ribosome. In Thermotoga petrophila (strain ATCC BAA-488 / DSM 13995 / JCM 10881 / RKU-1), this protein is Large ribosomal subunit protein uL14.